We begin with the raw amino-acid sequence, 170 residues long: Cyclic pyranopterin monophosphate synthase (170 aa).

Residues 89–91 and 125–126 contribute to the substrate site; these read LCH and ME. Residue D140 is part of the active site.

Belongs to the MoaC family. In terms of assembly, homohexamer; trimer of dimers.

The catalysed reaction is (8S)-3',8-cyclo-7,8-dihydroguanosine 5'-triphosphate = cyclic pyranopterin phosphate + diphosphate. The protein operates within cofactor biosynthesis; molybdopterin biosynthesis. In terms of biological role, catalyzes the conversion of (8S)-3',8-cyclo-7,8-dihydroguanosine 5'-triphosphate to cyclic pyranopterin monophosphate (cPMP). The sequence is that of Cyclic pyranopterin monophosphate synthase from Streptomyces coelicolor (strain ATCC BAA-471 / A3(2) / M145).